The primary structure comprises 203 residues: Ribosomal RNA large subunit methyltransferase E (203 aa).

Gly-59, Trp-61, Asp-79, Asn-95, and Asp-118 together coordinate S-adenosyl-L-methionine. Lys-158 functions as the Proton acceptor in the catalytic mechanism.

Belongs to the class I-like SAM-binding methyltransferase superfamily. RNA methyltransferase RlmE family.

The protein resides in the cytoplasm. The catalysed reaction is uridine(2552) in 23S rRNA + S-adenosyl-L-methionine = 2'-O-methyluridine(2552) in 23S rRNA + S-adenosyl-L-homocysteine + H(+). Its function is as follows. Specifically methylates the uridine in position 2552 of 23S rRNA at the 2'-O position of the ribose in the fully assembled 50S ribosomal subunit. The polypeptide is Ribosomal RNA large subunit methyltransferase E (Wigglesworthia glossinidia brevipalpis).